The following is a 507-amino-acid chain: Secreted lipase ARB_01498 (507 aa).

A signal peptide spans 1–21; that stretch reads MFVQLLTYGLVAASTLQGVFA. Catalysis depends on Ser-196, which acts as the Acyl-ester intermediate. Asn-262, Asn-321, Asn-358, and Asn-416 each carry an N-linked (GlcNAc...) asparagine glycan.

It belongs to the type-B carboxylesterase/lipase family.

Its subcellular location is the secreted. The enzyme catalyses a triacylglycerol + H2O = a diacylglycerol + a fatty acid + H(+). In Arthroderma benhamiae (strain ATCC MYA-4681 / CBS 112371) (Trichophyton mentagrophytes), this protein is Secreted lipase ARB_01498.